The sequence spans 421 residues: Histidine--tRNA ligase (421 aa).

Belongs to the class-II aminoacyl-tRNA synthetase family. In terms of assembly, homodimer.

The protein resides in the cytoplasm. The catalysed reaction is tRNA(His) + L-histidine + ATP = L-histidyl-tRNA(His) + AMP + diphosphate + H(+). The protein is Histidine--tRNA ligase of Francisella tularensis subsp. holarctica (strain OSU18).